The chain runs to 674 residues: Polyunsaturated fatty acid 5-lipoxygenase (674 aa).

In terms of domain architecture, PLAT spans Pro-2–Lys-118. Ca(2+) is bound by residues Gly-17, Thr-18, Asp-19, Asn-44, Asp-45, Glu-47, Asp-79, and Asp-80. The Lipoxygenase domain maps to Leu-119 to Ile-674. Phosphoserine; by MAPKAPK2 is present on Ser-272. Residues His-368 and His-373 each contribute to the Fe cation site. Phosphoserine; by PKA is present on Ser-524. His-551, Asn-555, and Ile-674 together coordinate Fe cation.

It belongs to the lipoxygenase family. In terms of assembly, homodimer. Interacts with ALOX5AP and LTC4S. Interacts with COTL1, the interaction is required for stability and efficient catalytic activity. Interacts with PIK3R1; this interaction bridges ALOX5 with CD40 after CD40 ligation in B cells and leads to the production of reactive oxygen species (ROS). Interacts (via PLAT domain) with DICER1 (via Dicer dsRNA-binding fold domain); this interaction enhances arachidonate 5-lipoxygenase activity and modifies the miRNA precursor processing activity of DICER1. The cofactor is Fe cation. In terms of processing, serine phosphorylation by MAPKAPK2 is stimulated by arachidonic acid. Phosphorylation on Ser-524 by PKA has an inhibitory effect. Phosphorylation on Ser-272 prevents export from the nucleus. Phosphorylation at Ser-524 is stimulated by 8-bromo-3',5'-cyclic AMP or prostaglandin E2.

It localises to the cytoplasm. Its subcellular location is the nucleus matrix. The protein localises to the nucleus membrane. It is found in the perinuclear region. The protein resides in the cytosol. It localises to the nucleus envelope. Its subcellular location is the nucleus intermembrane space. It catalyses the reaction (5Z,8Z,11Z,14Z)-eicosatetraenoate + O2 = leukotriene A4 + H2O. The catalysed reaction is 18-HEPE + O2 = (5S)-hydroperoxy-18-hydroxy-(7E,9E,11Z,14Z,16E)-eicosapentaenoate. The enzyme catalyses (18R)-hydroxy-(5Z,8Z,11Z,14Z,16E)-eicosapentaenoate + O2 = (5S)-hydroperoxy-(18R)-hydroxy-(6E,8Z,11Z,14Z,16E)-eicosapentaenoate. It carries out the reaction (18S)-hydroxy-(5Z,8Z,11Z,14Z,16E)-eicosapentaenoate + O2 = (5S)-hydroperoxy-(18S)-hydroxy-(6E,8Z,11Z,14Z,16E)-eicosapentaenoate. It catalyses the reaction (5S)-hydroperoxy-(18S)-hydroxy-(6E,8Z,11Z,14Z,16E)-eicosapentaenoate = (5S,6S)-epoxy-(18S)-hydroxy-(7E,9E,11Z,14Z,16E)-eicosapentaenoate + H2O. The catalysed reaction is (5S)-hydroperoxy-(18R)-hydroxy-(6E,8Z,11Z,14Z,16E)-eicosapentaenoate = (5S,6S)-epoxy-(18R)-hydroxy-(7E,9E,11Z,14Z,16E)-eicosapentaenoate + H2O. The enzyme catalyses (5S)-hydroperoxy-18-hydroxy-(7E,9E,11Z,14Z,16E)-eicosapentaenoate = (5S,6S)-epoxy-18-hydroxy-(7E,9E,11Z,14Z,16E)-eicosapentaenoate + H2O. It carries out the reaction (5Z,8Z,11Z,14Z)-eicosatetraenoate + O2 = (5S)-hydroperoxy-(6E,8Z,11Z,14Z)-eicosatetraenoate. It catalyses the reaction (15S)-hydroxy-(5Z,8Z,11Z,13E)-eicosatetraenoate + O2 = (5S)-hydroperoxy-(15S)-hydroxy-(6E,8Z,11Z,13E)-eicosatetraenoate. The catalysed reaction is (5S)-hydroperoxy-(6E,8Z,11Z,14Z)-eicosatetraenoate = leukotriene A4 + H2O. The enzyme catalyses (5Z,8Z,11Z,14Z)-eicosatetraenoate + O2 = (8S)-hydroperoxy-(5Z,9E,11Z,14Z)-eicosatetraenoate. It carries out the reaction (5Z,8Z,11Z,14Z)-eicosatetraenoate + O2 = (12S)-hydroperoxy-(5Z,8Z,10E,14Z)-eicosatetraenoate. It catalyses the reaction (5Z,8Z)-eicosadienoate + O2 = (5S)-hydroperoxy-(6E,8Z)-eicosadienoate. The catalysed reaction is (12S)-hydroxy-(5Z,8Z,10E,14Z)-eicosatetraenoate + O2 = (5S)-hydroperoxy-(12S)-hydroxy-(6E,8Z,10E,14Z)-eicosatetraenoate. The enzyme catalyses (5Z,8Z,11Z,14Z,17Z)-eicosapentaenoate + O2 = 5-hydroperoxy-(6E,8Z,11Z,14Z,17Z)-eicosapentaenoate. It carries out the reaction (4Z,7Z,10Z,13Z,16Z,19Z)-docosahexaenoate + O2 = (14S)-hydroperoxy-(4Z,7Z,10Z,12E,16Z,19Z)-docosahexaenoate. It catalyses the reaction (4Z,7Z,10Z,13Z,16Z,19Z)-docosahexaenoate + O2 = (7S)-hydroperoxy-(4Z,8E,10Z,13Z,16Z,19Z)-docosahexaenoate. The catalysed reaction is (4Z,7Z,10Z,13Z,16Z,19Z)-docosahexaenoate + O2 = (17S)-hydroperoxy-(4Z,7Z,10Z,13Z,15E,19Z)-docosahexaenoate. It participates in lipid metabolism; leukotriene A4 biosynthesis. With respect to regulation, undergoes a sequential loss of the oxygenase and pseudoperoxidase activities which is dependent on the structural characteristics of the substrate for the reaction, on oxygen concentration and on exposure to phospholipids and calcium. 15-HETE and other 15-mono-hydroxyeicosanoids exhibit the highest inhibitory potencies in their capability of suppressing 5-lipoxygenation of arachidonic acid, whereas the other HETEs, (5S,15S)-dihydroxy-(6E,8Z,11Z,13E)-eicosatetraenoic acid (5,15-diHETE) as well as octadecanoids, are modest or poor inhibitors. The formation of (5S)-hydroperoxy-(15S)-hydroxy-(6E,8Z,11Z,13E)-eicosatetraenoate is strongly stimulated by either hydroperoxypolyenoic fatty acids or arachidonic acid. Arachidonate 5-lipoxygenase and leukotriene A4 synthase activities are allosterically increased by ATP. Catalyzes the oxygenation of arachidonate ((5Z,8Z,11Z,14Z)-eicosatetraenoate) to 5-hydroperoxyeicosatetraenoate (5-HPETE) followed by the dehydration to 5,6- epoxyeicosatetraenoate (Leukotriene A4/LTA4), the first two steps in the biosynthesis of leukotrienes, which are potent mediators of inflammation. Also catalyzes the oxygenation of arachidonate into 8-hydroperoxyicosatetraenoate (8-HPETE) and 12-hydroperoxyicosatetraenoate (12-HPETE). Displays lipoxin synthase activity being able to convert (15S)-HETE into a conjugate tetraene. Although arachidonate is the preferred substrate, this enzyme can also metabolize oxidized fatty acids derived from arachidonate such as (15S)-HETE, eicosapentaenoate (EPA) such as (18R)- and (18S)-HEPE or docosahexaenoate (DHA) which lead to the formation of specialized pro-resolving mediators (SPM) lipoxin and resolvins E and D respectively, therefore it participates in anti-inflammatory responses. Oxidation of DHA directly inhibits endothelial cell proliferation and sprouting angiogenesis via peroxisome proliferator-activated receptor gamma (PPARgamma). It does not catalyze the oxygenation of linoleic acid and does not convert (5S)-HETE to lipoxin isomers. In addition to inflammatory processes, it participates in dendritic cell migration, wound healing through an antioxidant mechanism based on heme oxygenase-1 (HO-1) regulation expression, monocyte adhesion to the endothelium via ITGAM expression on monocytes. Moreover, it helps establish an adaptive humoral immunity by regulating primary resting B cells and follicular helper T cells and participates in the CD40-induced production of reactive oxygen species (ROS) after CD40 ligation in B cells through interaction with PIK3R1 that bridges ALOX5 with CD40. May also play a role in glucose homeostasis, regulation of insulin secretion and palmitic acid-induced insulin resistance via AMPK. Can regulate bone mineralization and fat cell differentiation increases in induced pluripotent stem cells. The protein is Polyunsaturated fatty acid 5-lipoxygenase of Homo sapiens (Human).